The following is a 168-amino-acid chain: Crossover junction endodeoxyribonuclease RuvC (168 aa).

Residues Asp-11, Glu-71, and Asp-144 contribute to the active site. Asp-11, Glu-71, and Asp-144 together coordinate Mg(2+).

The protein belongs to the RuvC family. Homodimer which binds Holliday junction (HJ) DNA. The HJ becomes 2-fold symmetrical on binding to RuvC with unstacked arms; it has a different conformation from HJ DNA in complex with RuvA. In the full resolvosome a probable DNA-RuvA(4)-RuvB(12)-RuvC(2) complex forms which resolves the HJ. Mg(2+) is required as a cofactor.

The protein resides in the cytoplasm. It carries out the reaction Endonucleolytic cleavage at a junction such as a reciprocal single-stranded crossover between two homologous DNA duplexes (Holliday junction).. In terms of biological role, the RuvA-RuvB-RuvC complex processes Holliday junction (HJ) DNA during genetic recombination and DNA repair. Endonuclease that resolves HJ intermediates. Cleaves cruciform DNA by making single-stranded nicks across the HJ at symmetrical positions within the homologous arms, yielding a 5'-phosphate and a 3'-hydroxyl group; requires a central core of homology in the junction. The consensus cleavage sequence is 5'-(A/T)TT(C/G)-3'. Cleavage occurs on the 3'-side of the TT dinucleotide at the point of strand exchange. HJ branch migration catalyzed by RuvA-RuvB allows RuvC to scan DNA until it finds its consensus sequence, where it cleaves and resolves the cruciform DNA. This Protochlamydia amoebophila (strain UWE25) protein is Crossover junction endodeoxyribonuclease RuvC.